A 177-amino-acid polypeptide reads, in one-letter code: Large ribosomal subunit protein uL6 (177 aa).

It belongs to the universal ribosomal protein uL6 family. In terms of assembly, part of the 50S ribosomal subunit.

This protein binds to the 23S rRNA, and is important in its secondary structure. It is located near the subunit interface in the base of the L7/L12 stalk, and near the tRNA binding site of the peptidyltransferase center. The chain is Large ribosomal subunit protein uL6 from Nitrosospira multiformis (strain ATCC 25196 / NCIMB 11849 / C 71).